The primary structure comprises 843 residues: Protein P (843 aa).

Positions 1–177 are terminal protein domain (TP); the sequence is MPLSYQHFRK…FCGSPYSWEQ (177 aa). The tract at residues 178–346 is spacer; sequence DLQHGRLVFQ…YCLYHIVNLI (169 aa). The segment at 219-250 is disordered; that stretch reads RKSRLGPQPAQGQLAGRQQGGSGSIRARVHPS. Low complexity predominate over residues 223–235; it reads LGPQPAQGQLAGR. Positions 347 to 690 are polymerase/reverse transcriptase domain (RT); the sequence is EDWGPCTEHG…YLNLYPVARQ (344 aa). A Reverse transcriptase domain is found at 357-600; sequence EHRIRTPRTP…YSLNFMGYVI (244 aa). Residues D429, D551, and D552 each coordinate Mg(2+).

It belongs to the hepadnaviridae P protein family.

The catalysed reaction is DNA(n) + a 2'-deoxyribonucleoside 5'-triphosphate = DNA(n+1) + diphosphate. It catalyses the reaction Endonucleolytic cleavage to 5'-phosphomonoester.. Its activity is regulated as follows. Activated by host HSP70 and HSP40 in vitro to be able to bind the epsilon loop of the pgRNA. Because deletion of the RNase H region renders the protein partly chaperone-independent, the chaperones may be needed indirectly to relieve occlusion of the RNA-binding site by this domain. Inhibited by several reverse-transcriptase inhibitors: Lamivudine, Adefovir and Entecavir. In terms of biological role, multifunctional enzyme that converts the viral RNA genome into dsDNA in viral cytoplasmic capsids. This enzyme displays a DNA polymerase activity that can copy either DNA or RNA templates, and a ribonuclease H (RNase H) activity that cleaves the RNA strand of RNA-DNA heteroduplexes in a partially processive 3'- to 5'-endonucleasic mode. Neo-synthesized pregenomic RNA (pgRNA) are encapsidated together with the P protein, and reverse-transcribed inside the nucleocapsid. Initiation of reverse-transcription occurs first by binding the epsilon loop on the pgRNA genome, and is initiated by protein priming, thereby the 5'-end of (-)DNA is covalently linked to P protein. Partial (+)DNA is synthesized from the (-)DNA template and generates the relaxed circular DNA (RC-DNA) genome. After budding and infection, the RC-DNA migrates in the nucleus, and is converted into a plasmid-like covalently closed circular DNA (cccDNA). The activity of P protein does not seem to be necessary for cccDNA generation, and is presumably released from (+)DNA by host nuclear DNA repair machinery. The protein is Protein P of Hepatitis B virus genotype B2 (isolate Vietnam/16091/1992) (HBV-B).